Reading from the N-terminus, the 510-residue chain is ATP synthase subunit alpha (510 aa).

ATP is bound at residue 169-176 (GDRQTGKT).

Belongs to the ATPase alpha/beta chains family. F-type ATPases have 2 components, CF(1) - the catalytic core - and CF(0) - the membrane proton channel. CF(1) has five subunits: alpha(3), beta(3), gamma(1), delta(1), epsilon(1). CF(0) has three main subunits: a(1), b(2) and c(9-12). The alpha and beta chains form an alternating ring which encloses part of the gamma chain. CF(1) is attached to CF(0) by a central stalk formed by the gamma and epsilon chains, while a peripheral stalk is formed by the delta and b chains.

It localises to the cell inner membrane. The enzyme catalyses ATP + H2O + 4 H(+)(in) = ADP + phosphate + 5 H(+)(out). Produces ATP from ADP in the presence of a proton gradient across the membrane. The alpha chain is a regulatory subunit. The sequence is that of ATP synthase subunit alpha from Anaeromyxobacter dehalogenans (strain 2CP-1 / ATCC BAA-258).